Consider the following 422-residue polypeptide: F-box/kelch-repeat protein At3g27150 (422 aa).

One can recognise an F-box domain in the interval 68–114; that stretch reads LLNVPQLVYELEVEILARVPRFEYWKLKLLNKGFSRLLKSDEIFKVR. Kelch repeat units lie at residues 162 to 212, 213 to 264, 266 to 312, 314 to 361, and 366 to 412; these read ESLC…TCGT, VVFV…YLRG, FYVL…SPPL, AVVG…VAFK, and KLLV…RFNH.

The polypeptide is F-box/kelch-repeat protein At3g27150 (Arabidopsis thaliana (Mouse-ear cress)).